Here is a 272-residue protein sequence, read N- to C-terminus: MSQPILVFDSGIGGLSVLAEIRKLLPHHNYCYLFDNARLPYGELEEQELISGCVALIDQVVERTHAAIVVVACNTASTVVLPALRATLSIPVVGVVPAIKPAAQLSKSKRIGLLATPGTVKRHYTYELISQFADDCHVELFGSSELVLMAEQKIATGQLDMARLAQVLSPIVEADLDVLVLGCTHFPMLRDELQQVLGKGVTLLDSGEAIAKRVKTLLAETKSEQQVQEDANRDSVMQAFYTKAEISEGLASMLVDCGFSTLERITTINSNR.

Residues 9 to 10 and 41 to 42 each bind substrate; these read DS and YG. Cysteine 73 functions as the Proton donor/acceptor in the catalytic mechanism. A substrate-binding site is contributed by 74 to 75; sequence NT. Cysteine 183 serves as the catalytic Proton donor/acceptor. 184-185 contacts substrate; sequence TH.

This sequence belongs to the aspartate/glutamate racemases family.

It catalyses the reaction L-glutamate = D-glutamate. It functions in the pathway cell wall biogenesis; peptidoglycan biosynthesis. Its function is as follows. Provides the (R)-glutamate required for cell wall biosynthesis. This Shewanella sp. (strain MR-7) protein is Glutamate racemase.